An 809-amino-acid polypeptide reads, in one-letter code: Probable disease resistance protein At5g66900 (809 aa).

The region spanning 1-150 (MNDWASLGIG…LSKRMDLLSV (150 aa)) is the RPW8 domain. Positions 50–86 (PLTQKIDSMQKELDFGVKELKELRDTIERADVAVRKF) form a coiled coil. 2 consecutive NB-ARC domains span residues 153–280 (PVFR…DDVW) and 339–438 (SPDE…DMWV). 194–201 (APPGCGKT) is an ATP binding site. A coiled-coil region spans residues 494 to 515 (QSEFKENLERKRLNLEILENTF). 4 LRR repeats span residues 650–672 (KLQE…ISEI), 674–696 (SLKT…IGNL), 698–720 (RLEV…TEGL), and 722–744 (NLRF…IGKL).

The protein belongs to the disease resistance NB-LRR family.

Its function is as follows. Probable disease resistance protein. The chain is Probable disease resistance protein At5g66900 from Arabidopsis thaliana (Mouse-ear cress).